Here is a 485-residue protein sequence, read N- to C-terminus: MYREKFTKITEGFTFDDVLLIPMRTAVEPKNVVVSSRISRHIQVKVPIVSSPMDTVTEDAMAIAMARYGAIGVIHRNQPREKEVEMVKRVKREETIIIRDVYTISPETPIEVARTLMATRNIAGLPVVKDDKLVGIVTKRDLEFVKKGSSVSDVMVRDVITAPENVDIDEAIEILHKNRIEKLPLVDSSGHLVGLITAKDIITRQKFPDASRDSEGQLMVGAAVGPFDLDRAVEVEKAGADFIVVDTAHADNENVLSSLKKMRKQISVDIVAGNIATAQAAEDLISCDVDGLRVGIGPGSICTTRIVAGVGVPQLTAISDVAEAAKDSGIPVIADGGIRYSGDIVKAIAAGADAVMLGSMLAGTEESPGQEMIINGRKYKAYRGMGSIGALTTGLSDRYSKLGNGFIAEGVEGAVPYRGRVDEVLFQLVGGLRTGMGYVGAATIEDLKRNGKFVRITNNGLRESHPHDIRLISEPPNYQISNISP.

CBS domains lie at 97-154 (IIRD…VSDV) and 155-211 (MVRD…PDAS). NAD(+) contacts are provided by residues Asp246 and 295–297 (GIG). 2 residues coordinate K(+): Gly297 and Gly299. Ser300 is an IMP binding site. A K(+)-binding site is contributed by Cys302. The active-site Thioimidate intermediate is Cys302. Residues 335–337 (DGG), 358–359 (GS), and 382–386 (YRGMG) each bind IMP. Arg398 serves as the catalytic Proton acceptor. Glu409 provides a ligand contact to IMP. 3 residues coordinate K(+): Glu463, Ser464, and His465.

It belongs to the IMPDH/GMPR family. Homotetramer. K(+) is required as a cofactor.

The catalysed reaction is IMP + NAD(+) + H2O = XMP + NADH + H(+). Its pathway is purine metabolism; XMP biosynthesis via de novo pathway; XMP from IMP: step 1/1. Mycophenolic acid (MPA) is a non-competitive inhibitor that prevents formation of the closed enzyme conformation by binding to the same site as the amobile flap. In contrast, mizoribine monophosphate (MZP) is a competitive inhibitor that induces the closed conformation. MPA is a potent inhibitor of mammalian IMPDHs but a poor inhibitor of the bacterial enzymes. MZP is a more potent inhibitor of bacterial IMPDH. Its function is as follows. Catalyzes the conversion of inosine 5'-phosphate (IMP) to xanthosine 5'-phosphate (XMP), the first committed and rate-limiting step in the de novo synthesis of guanine nucleotides, and therefore plays an important role in the regulation of cell growth. This is Inosine-5'-monophosphate dehydrogenase from Thermoplasma acidophilum (strain ATCC 25905 / DSM 1728 / JCM 9062 / NBRC 15155 / AMRC-C165).